The primary structure comprises 319 residues: Thymidylate synthase (319 aa).

Residues Arg25 and Arg181–Arg182 each bind dUMP. The Nucleophile role is filled by Cys201. DUMP-binding positions include Arg221 to Asp224, Asn232, and His262 to Tyr264. Asp224 serves as a coordination point for (6R)-5,10-methylene-5,6,7,8-tetrahydrofolate. Position 318 (Ala318) interacts with (6R)-5,10-methylene-5,6,7,8-tetrahydrofolate.

The protein belongs to the thymidylate synthase family. Bacterial-type ThyA subfamily. In terms of assembly, homodimer.

The protein localises to the cytoplasm. It carries out the reaction dUMP + (6R)-5,10-methylene-5,6,7,8-tetrahydrofolate = 7,8-dihydrofolate + dTMP. The protein operates within pyrimidine metabolism; dTTP biosynthesis. Its function is as follows. Catalyzes the reductive methylation of 2'-deoxyuridine-5'-monophosphate (dUMP) to 2'-deoxythymidine-5'-monophosphate (dTMP) while utilizing 5,10-methylenetetrahydrofolate (mTHF) as the methyl donor and reductant in the reaction, yielding dihydrofolate (DHF) as a by-product. This enzymatic reaction provides an intracellular de novo source of dTMP, an essential precursor for DNA biosynthesis. The protein is Thymidylate synthase of Oenococcus oeni (strain ATCC BAA-331 / PSU-1).